A 92-amino-acid polypeptide reads, in one-letter code: N(2)-fixation sustaining protein CowN (92 aa).

This sequence belongs to the CowN family.

Functionally, is required to sustain N(2)-dependent growth in the presence of low levels of carbon monoxide (CO). Probably acts by protecting the N(2) fixation ability of the nitrogenase complex, which is inactivated in the presence of CO. The protein is N(2)-fixation sustaining protein CowN of Cereibacter sphaeroides (strain ATCC 17025 / ATH 2.4.3) (Rhodobacter sphaeroides).